A 257-amino-acid chain; its full sequence is 5'-nucleotidase SurE (257 aa).

Positions 8, 9, 40, and 97 each coordinate a divalent metal cation.

It belongs to the SurE nucleotidase family. Requires a divalent metal cation as cofactor.

The protein localises to the cytoplasm. The catalysed reaction is a ribonucleoside 5'-phosphate + H2O = a ribonucleoside + phosphate. In terms of biological role, nucleotidase that shows phosphatase activity on nucleoside 5'-monophosphates. In Desulforudis audaxviator (strain MP104C), this protein is 5'-nucleotidase SurE.